The chain runs to 31 residues: Hyaluronidase (31 aa).

This sequence belongs to the glycosyl hydrolase 56 family. Post-translationally, contains 2 disulfide bonds. In terms of processing, N-glycosylated on at least two Asn residues by identical heptasaccharide units composed of Man, GlcNAc, and Fuc residues in the molar ration of 3:2:2. Expressed by the venom gland.

It is found in the secreted. It catalyses the reaction Random hydrolysis of (1-&gt;4)-linkages between N-acetyl-beta-D-glucosamine and D-glucuronate residues in hyaluronate.. Functionally, hydrolyzes high molecular weight hyaluronic acid to produce small oligosaccharides. This chain is Hyaluronidase, found in Vespula maculifrons (Eastern yellow jacket).